Consider the following 350-residue polypeptide: UDP-N-acetylenolpyruvoylglucosamine reductase (350 aa).

The FAD-binding PCMH-type domain occupies 24 to 195 (HVEATARWLL…VAVEFNLPLL (172 aa)). Arg172 is an active-site residue. Ser245 acts as the Proton donor in catalysis. Residue Glu342 is part of the active site.

This sequence belongs to the MurB family. FAD serves as cofactor.

It localises to the cytoplasm. It carries out the reaction UDP-N-acetyl-alpha-D-muramate + NADP(+) = UDP-N-acetyl-3-O-(1-carboxyvinyl)-alpha-D-glucosamine + NADPH + H(+). Its pathway is cell wall biogenesis; peptidoglycan biosynthesis. Its function is as follows. Cell wall formation. The protein is UDP-N-acetylenolpyruvoylglucosamine reductase of Xanthomonas oryzae pv. oryzae (strain MAFF 311018).